The sequence spans 270 residues: MAIVLRTVDFSETSLIVTLLTKDLGRISALAKGARRLKGPFEGSLDLLSVCAITLIDKPGDTLDLLTESKLRRRFRGAQRSLERLHAGYYIAEMLRLLVDDDDPHRELFDMTLSAMGMIDGEGHVAKTLLAFDAQCLRLLGHSPATQRCTVCGRDAERSRRRASFSLVGGGVVCENCRPSQSHLMTASWDALDALRELASEPELPPSTIDADTDNPSQPPSTAFPIGRLFPAMTPAIYRDLRGLLNRTLESLVGQTPRMQPFLPDKLDSL.

Residues 202–221 (PELPPSTIDADTDNPSQPPS) are disordered.

This sequence belongs to the RecO family.

In terms of biological role, involved in DNA repair and RecF pathway recombination. The sequence is that of DNA repair protein RecO from Rhodopirellula baltica (strain DSM 10527 / NCIMB 13988 / SH1).